Here is a 320-residue protein sequence, read N- to C-terminus: Peptidase 1 (320 aa).

An N-terminal signal peptide occupies residues 1–18 (MKIVLAIASLLALSAVYA). A propeptide spans 19-98 (RPSSIKTFEE…LKTQFDLNAE (80 aa)) (activation peptide). 3 disulfides stabilise this stretch: cysteine 102/cysteine 215, cysteine 129/cysteine 169, and cysteine 163/cysteine 201. Cysteine 132 is a catalytic residue. Asparagine 150 carries N-linked (GlcNAc...) asparagine glycosylation. Residues histidine 268 and asparagine 288 contribute to the active site.

The protein belongs to the peptidase C1 family. In terms of processing, N-glycosylated. N-glycanase treatment does not completely remove carbohydrates, suggesting that the protein contains additional glycosylation sites.

It localises to the secreted. It catalyses the reaction Broad endopeptidase specificity.. Its function is as follows. Thiol protease, with a preference for substrates with a large hydrophobic side chain in the P2 position, or with basic residues. The polypeptide is Peptidase 1 (DERP1) (Dermatophagoides pteronyssinus (European house dust mite)).